Here is a 64-residue protein sequence, read N- to C-terminus: Large ribosomal subunit protein bL35 (64 aa).

Residues 1–45 show a composition bias toward basic residues; sequence MPKMKTHKGAAKRFKKTGKGKIKRRKAFKSHILTKKTPKRKRNLR. The segment at 1 to 64 is disordered; the sequence is MPKMKTHKGA…EEKRIKRLLP (64 aa).

This sequence belongs to the bacterial ribosomal protein bL35 family.

This is Large ribosomal subunit protein bL35 from Natranaerobius thermophilus (strain ATCC BAA-1301 / DSM 18059 / JW/NM-WN-LF).